The primary structure comprises 229 residues: Cytosolic-abundant heat soluble protein 107838 (229 aa).

Positions 1 to 29 (MSAEAMNMNMNQDAVFIPPPEGEQYERKE) are disordered. A coiled-coil region spans residues 109–145 (LSANYQKEVERKTEAYRKQQEVEADKIRKELEKQHLR). CAHS motif regions lie at residues 124–142 (YRKQQEVEADKIRKELEKQ) and 161–179 (QKKMIDVESRYAKKDMDRE). A compositionally biased stretch (polar residues) spans 202-218 (SSAAGTETGGQVVSESQ). Residues 202–229 (SSAAGTETGGQVVSESQKFTERNRQIKQ) form a disordered region. Over residues 219–229 (KFTERNRQIKQ) the composition is skewed to basic and acidic residues.

It belongs to the Cytosolic-abundant heat soluble protein (CAHS) family.

It is found in the cytoplasm. Functionally, CAHS proteins are cytosolic heat soluble proteins that seem to contribute to the anhydrobiosis in tardigrades, but their specific mechanisms are yet to be identified. It is possible that protection during anhydrobiosis might occur via the stabilization of vitrifying small molecules such as sugars, but not via the direct glass transition of CAHS proteins themselves. The sequence is that of Cytosolic-abundant heat soluble protein 107838 from Paramacrobiotus richtersi (Water bear).